The primary structure comprises 96 residues: Large ribosomal subunit protein uL23 (96 aa).

Belongs to the universal ribosomal protein uL23 family. Part of the 50S ribosomal subunit. Contacts protein L29, and trigger factor when it is bound to the ribosome.

In terms of biological role, one of the early assembly proteins it binds 23S rRNA. One of the proteins that surrounds the polypeptide exit tunnel on the outside of the ribosome. Forms the main docking site for trigger factor binding to the ribosome. This Caldanaerobacter subterraneus subsp. tengcongensis (strain DSM 15242 / JCM 11007 / NBRC 100824 / MB4) (Thermoanaerobacter tengcongensis) protein is Large ribosomal subunit protein uL23.